The following is a 301-amino-acid chain: Acetylglutamate kinase (301 aa).

Residues 70 to 71, arginine 92, and asparagine 185 each bind substrate; that span reads GG.

It belongs to the acetylglutamate kinase family. ArgB subfamily.

It localises to the cytoplasm. It catalyses the reaction N-acetyl-L-glutamate + ATP = N-acetyl-L-glutamyl 5-phosphate + ADP. It functions in the pathway amino-acid biosynthesis; L-arginine biosynthesis; N(2)-acetyl-L-ornithine from L-glutamate: step 2/4. In terms of biological role, catalyzes the ATP-dependent phosphorylation of N-acetyl-L-glutamate. In Synechococcus elongatus (strain ATCC 33912 / PCC 7942 / FACHB-805) (Anacystis nidulans R2), this protein is Acetylglutamate kinase.